The sequence spans 71 residues: MNSIPVPTLTETSRSFIIIPLSVSITHCLTRDSFGIVRTISSNGITAHLVNSLYILCNMALLLPYTINLLL.

This is an uncharacterized protein from Homo sapiens (Human).